Reading from the N-terminus, the 560-residue chain is Embryonal Fyn-associated substrate (560 aa).

The region spanning 5–68 (TSAQLARALY…PANRVKLLPA (64 aa)) is the SH3 domain. Disordered stretches follow at residues 176–219 (VVPQ…LYAA) and 241–372 (ANGE…NEYE). The span at 198–210 (AELERDPEWEGGR) shows a compositional bias: basic and acidic residues. At Y253 the chain carries Phosphotyrosine; by SRC. Over residues 259-268 (GPEPPSPEPP) the composition is skewed to pro residues. 2 consecutive short sequence motifs (SH3-binding) follow at residues 304-310 (RPLPALP) and 334-340 (RPLPPPP). Over residues 305-315 (PLPALPVSEAP) the composition is skewed to low complexity. Over residues 351–361 (PEGDPECREVA) the composition is skewed to basic and acidic residues. The segment at 437 to 487 (FYAGQCQSHYSALQAAVAALVASTQANQPPCLFVPHGKRVVVAAHRLVFVG) is divergent helix-loop-helix motif.

This sequence belongs to the CAS family. Phosphorylated on multiple tyrosine residues. Phosphorylated on tyrosines by FYN and SRC. In terms of tissue distribution, widely expressed. Higher levels found in placenta and embryo. Lower levels found in brain, brainstem, muscle and lung. No expression in liver and intestine.

Docking protein which plays a central coordinating role for tyrosine-kinase-based signaling related to cell adhesion. May serve as an activator of SRC and a downstream effector. Interacts with the SH3 domain of FYN and with CRK, SRC, and YES. This chain is Embryonal Fyn-associated substrate (Efs), found in Mus musculus (Mouse).